The following is a 393-amino-acid chain: Probable galacturonosyltransferase-like 8 (393 aa).

Topologically, residues 1 to 4 (MSSR) are cytoplasmic. The helical; Signal-anchor for type II membrane protein transmembrane segment at 5–25 (FSLTVVCLIALLPFVVGIRLI) threads the bilayer. Topologically, residues 26-393 (PARITSVGDG…SELTDDSSFL (368 aa)) are lumenal. Residue Asn226 is glycosylated (N-linked (GlcNAc...) asparagine).

Belongs to the glycosyltransferase 8 family.

The protein resides in the golgi apparatus membrane. It participates in glycan metabolism; pectin biosynthesis. Its function is as follows. May be involved in pectin and/or xylans biosynthesis in cell walls. The sequence is that of Probable galacturonosyltransferase-like 8 (GATL8) from Arabidopsis thaliana (Mouse-ear cress).